We begin with the raw amino-acid sequence, 256 residues long: Kallikrein 1-related peptidase-like b4 (256 aa).

Positions Met1–Ala17 are cleaved as a signal peptide. The interval Ala18–Gln24 is activation peptide homolog. The region spanning Ala18–Ala253 is the Peptidase S1 domain. The cysteines at positions 45 and 61 are disulfide-linked. Zn(2+) is bound by residues Glu77 and His84. 3 disulfide bridges follow: Cys147–Cys214, Cys179–Cys193, and Cys204–Cys229.

This sequence belongs to the peptidase S1 family. Kallikrein subfamily. As to quaternary structure, 7S nerve growth factor is composed of two alpha chains, a beta dimer composed of identical chains, and two gamma chains. It depends on Zn(2+) as a cofactor. Post-translationally, the presence of Gln-24 prevents cleavage of the activation peptide, which remains attached at the amino end of the mature alpha chain.

The protein is Kallikrein 1-related peptidase-like b4 (Klk1b4) of Mus musculus (Mouse).